A 600-amino-acid polypeptide reads, in one-letter code: Zinc metalloproteinase-disintegrin-like stejnihagin-A (600 aa).

A signal peptide spans 1 to 20; the sequence is MIEVLLVTICLAVFPYQGSS. The propeptide occupies 21–191; sequence IILESGNVND…KASQLVVTAE (171 aa). Glutamine 192 carries the post-translational modification Pyrrolidone carboxylic acid. The 192-residue stretch at 198–389 folds into the Peptidase M12B domain; that stretch reads RYVKLAIVAD…YNPQCILNAP (192 aa). 3 disulfide bridges follow: cysteine 306–cysteine 384, cysteine 346–cysteine 368, and cysteine 348–cysteine 351. An N-linked (GlcNAc...) asparagine glycan is attached at asparagine 317. Histidine 331 is a binding site for Zn(2+). The active site involves glutamate 332. Residues histidine 335 and histidine 341 each contribute to the Zn(2+) site. A glycan (N-linked (GlcNAc...) asparagine) is linked at asparagine 367. Residues 397–483 enclose the Disintegrin domain; the sequence is PPVCGNELLE…DCPTDDFHRN (87 aa). 6 residues coordinate Ca(2+): valine 399, asparagine 402, leucine 404, glutamate 406, glutamate 409, and aspartate 412. Cystine bridges form between cysteine 400-cysteine 429, cysteine 411-cysteine 424, cysteine 413-cysteine 419, cysteine 423-cysteine 446, cysteine 437-cysteine 443, cysteine 442-cysteine 468, cysteine 455-cysteine 475, cysteine 462-cysteine 494, cysteine 487-cysteine 499, cysteine 506-cysteine 556, cysteine 521-cysteine 565, cysteine 534-cysteine 544, cysteine 551-cysteine 587, and cysteine 581-cysteine 593. The short motif at 461-463 is the D/ECD-tripeptide element; the sequence is ECD. N-linked (GlcNAc...) asparagine glycosylation occurs at asparagine 568.

This sequence belongs to the venom metalloproteinase (M12B) family. P-III subfamily. P-IIIa sub-subfamily. In terms of assembly, monomer. Requires Zn(2+) as cofactor. As to expression, expressed by the venom gland.

It localises to the secreted. Functionally, this metalloproteinase-disintegrin-like impairs hemostasis in the envenomed animal. In Trimeresurus stejnegeri (Chinese green tree viper), this protein is Zinc metalloproteinase-disintegrin-like stejnihagin-A.